The primary structure comprises 258 residues: Terpene cyclase macJ (258 aa).

The next 7 helical transmembrane spans lie at 29-49 (VPDG…ILMA), 58-78 (YAMP…YGFV), 83-103 (LLNQ…FYAI), 124-144 (IIVV…ATFI), 151-171 (VVFM…IAQL), 181-201 (SWGI…CFFW), and 220-240 (FLLL…VYVQ).

It belongs to the paxB family.

It localises to the membrane. The protein operates within secondary metabolite biosynthesis; terpenoid biosynthesis. Its function is as follows. Terpene cyclase; part of the gene cluster that mediates the biosynthesis of macrophorins, isoprenoid epoxycyclohexenones containing cyclized drimane moieties. The first step of the pathway is the synthesis of 6-methylsalicylic acid (6-MSA) by the polyketide synthase macA. 6-MSA is then converted to m-cresol by the decarboxylase macB. The cytochrome P450 monooxygenase macC then catalyzes the oxidation of m-cresol to toluquinol. Epoxidation of toluquinol is then performed by the short chain dehydrogenase macD, with the help of macE, and a further prenylation by macG leads to 7-deacetoxyyanuthone A. The next step is the hydroxylation of C-22 of 7-deacetoxyyanuthone A by the cytochrome P450 monooxygenase macH to yield 22-deacetylyanuthone A. O-Mevalon transferase macI then attaches mevalon to the hydroxyl group of 22-deacetylyanuthone A to produce yanuthone E. The terpene cyclase macJ catalyzes the cyclization of 22-deacetylyanuthone A to macrophorin A. MacJ is also able to catalyze cyclization of yanuthone E and 7-deacetoxyyanuthone A to their corresponding macrophorins. The macJ products can be further modified by macH and macJ, as well as by the FAD-dependent monooxygenase macF, to produce additional macrophorins, including 4'-oxomacrophorin A, 4'-oxomacrophorin D and 4'-oxomacrophorin E. The sequence is that of Terpene cyclase macJ from Penicillium terrestre.